The sequence spans 533 residues: Flavin-containing monooxygenase 5 (533 aa).

R5 carries the dimethylated arginine modification. FAD is bound by residues 10 to 14 (GGGVS), E33, and 41 to 42 (LW). S54 carries the post-translational modification Phosphoserine. At Y56 the chain carries Phosphotyrosine. S58 carries the phosphoserine modification. Position 62–63 (62–63 (NT)) interacts with FAD. 196–199 (SGGD) contributes to the NADP(+) binding site. At S280 the chain carries Phosphoserine. T284 bears the Phosphothreonine mark. Phosphoserine is present on S401. A helical transmembrane segment spans residues 510–530 (MVSAVTTGCFMLAVVFFAIIM).

The protein belongs to the FMO family. FAD serves as cofactor. In terms of tissue distribution, expressed in liver.

It is found in the microsome membrane. The protein resides in the endoplasmic reticulum membrane. It catalyses the reaction N,N-dimethylaniline + NADPH + O2 + H(+) = N,N-dimethylaniline N-oxide + NADP(+) + H2O. The catalysed reaction is NADPH + O2 + H(+) = H2O2 + NADP(+). It carries out the reaction heptan-2-one + NADPH + O2 + H(+) = pentyl acetate + NADP(+) + H2O. The enzyme catalyses octan-3-one + NADPH + O2 + H(+) = pentyl propanoate + NADP(+) + H2O. It catalyses the reaction octan-3-one + NADPH + O2 + H(+) = ethyl hexanoate + NADP(+) + H2O. The catalysed reaction is hexan-3-one + NADPH + O2 + H(+) = ethyl butanoate + NADP(+) + H2O. It carries out the reaction hexan-3-one + NADPH + O2 + H(+) = propyl propanoate + NADP(+) + H2O. The enzyme catalyses heptan-4-one + NADPH + O2 + H(+) = propyl butanoate + NADP(+) + H2O. It catalyses the reaction (2E)-geranial + NADPH + O2 + H(+) = (1E)-2,6-dimethylhepta-1,5-dien-1-yl formate + NADP(+) + H2O. The catalysed reaction is sulcatone + NADPH + O2 + H(+) = 4-methylpent-3-en-1-yl acetate + NADP(+) + H2O. Acts as a Baeyer-Villiger monooxygenase on a broad range of substrates. Catalyzes the insertion of an oxygen atom into a carbon-carbon bond adjacent to a carbonyl, which converts ketones to esters. Active on diverse carbonyl compounds, whereas soft nucleophiles are mostly non- or poorly reactive. In contrast with other forms of FMO it is non- or poorly active on 'classical' substrates such as drugs, pesticides, and dietary components containing soft nucleophilic heteroatoms. Able to oxidize drug molecules bearing a carbonyl group on an aliphatic chain, such as nabumetone and pentoxifylline. Also, in the absence of substrates, shows slow but yet significant NADPH oxidase activity. Acts as a positive modulator of cholesterol biosynthesis as well as glucose homeostasis, promoting metabolic aging via pleiotropic effects. This chain is Flavin-containing monooxygenase 5 (FMO5), found in Cavia porcellus (Guinea pig).